Consider the following 224-residue polypeptide: N-(5'-phosphoribosyl)anthranilate isomerase (224 aa).

This sequence belongs to the TrpF family.

It carries out the reaction N-(5-phospho-beta-D-ribosyl)anthranilate = 1-(2-carboxyphenylamino)-1-deoxy-D-ribulose 5-phosphate. It participates in amino-acid biosynthesis; L-tryptophan biosynthesis; L-tryptophan from chorismate: step 3/5. The protein is N-(5'-phosphoribosyl)anthranilate isomerase of Sinorhizobium fredii (strain NBRC 101917 / NGR234).